The sequence spans 520 residues: Trichothecene O-acetyltransferase TRI3 (520 aa).

A disordered region spans residues 1-23 (MGSKLPELPKLSPEKHRWEKSNV). The span at 12–23 (SPEKHRWEKSNV) shows a compositional bias: basic and acidic residues.

The protein belongs to the trichothecene O-acetyltransferase family.

Its pathway is sesquiterpene biosynthesis; trichothecene biosynthesis. Trichothecene O-acetyltransferase; part of the gene cluster that mediates the production of the antimicrobial trichothecene harzianum A (HA) that plays a role in Botrytis cinerea antagonistic activity and plant defense priming. The biosynthesis of harzianum A begins with the cyclization of farnesyl diphosphate to trichodiene and is catalyzed by the trichodiene synthase TRI5. Trichodiene undergoes a series of oxygenations catalyzed by the cytochrome P450 monooxygenase TRI4. TRI4 controls the addition of 3 oxygens at C-2, C-11, and the C-12, C-13-epoxide to form the intermediate isotrichodiol. Isotrichodiol then undergoes a non-enzymatic isomerization and cyclization to form 12,13-epoxytrichothec-9-ene (EPT) which is further converted to trichodermol by the cytochrome P450 monooxygenase TRI11 via C-4 hydroxylation. The last step of HA synthesis is esterification of an octatriendioyl moiety to the C-4 oxygen of trichodermol. The octatriendioyl moiety is probably produced by the polyketide synthase TRI17 and the esterification performed by the trichothecene O-acetyltransferase TRI3. The chain is Trichothecene O-acetyltransferase TRI3 from Trichoderma arundinaceum.